A 215-amino-acid polypeptide reads, in one-letter code: Cytochrome b6 (215 aa).

Residues 32–52 (IFYCLGGITFTCFLVQVATGF) traverse the membrane as a helical segment. C35 serves as a coordination point for heme c. Heme b contacts are provided by H86 and H100. The next 3 membrane-spanning stretches (helical) occupy residues 90–110 (ASMM…TGGF), 116–136 (STWI…VTGY), and 186–206 (LHTF…FLMI). Heme b contacts are provided by H187 and H202.

It belongs to the cytochrome b family. PetB subfamily. In terms of assembly, the 4 large subunits of the cytochrome b6-f complex are cytochrome b6, subunit IV (17 kDa polypeptide, PetD), cytochrome f and the Rieske protein, while the 4 small subunits are PetG, PetL, PetM and PetN. The complex functions as a dimer. Heme b serves as cofactor. Requires heme c as cofactor.

The protein resides in the plastid. It is found in the chloroplast thylakoid membrane. Its function is as follows. Component of the cytochrome b6-f complex, which mediates electron transfer between photosystem II (PSII) and photosystem I (PSI), cyclic electron flow around PSI, and state transitions. The chain is Cytochrome b6 from Tetradesmus obliquus (Green alga).